Reading from the N-terminus, the 626-residue chain is Transketolase-like protein 2 (626 aa).

Position 37 (His37) interacts with substrate. Residues Ser40, His77, and 123–125 contribute to the thiamine diphosphate site; that span reads GSL. Asp155 contributes to the Mg(2+) binding site. Thiamine diphosphate-binding residues include Gly156 and Asn185. Residues Asn185 and Leu187 each coordinate Mg(2+). Positions 247 and 261 each coordinate thiamine diphosphate. 2 residues coordinate substrate: His261 and Ser348. Residues Glu369 and Phe395 each coordinate thiamine diphosphate. Catalysis depends on Glu369, which acts as the Proton donor. Positions 419 and 427 each coordinate substrate. Thiamine diphosphate is bound at residue Gln431. Arg477 contributes to the substrate binding site.

Belongs to the transketolase family. As to quaternary structure, homodimer. Mg(2+) is required as a cofactor. Requires Ca(2+) as cofactor. It depends on Mn(2+) as a cofactor. The cofactor is Co(2+). Thiamine diphosphate serves as cofactor.

The enzyme catalyses D-sedoheptulose 7-phosphate + D-glyceraldehyde 3-phosphate = aldehydo-D-ribose 5-phosphate + D-xylulose 5-phosphate. Functionally, plays an essential role in total transketolase activity and cell proliferation in cancer cells; after transfection with anti-TKTL1 siRNA, total transketolase activity dramatically decreases and proliferation was significantly inhibited in cancer cells. Plays a pivotal role in carcinogenesis. The protein is Transketolase-like protein 2 (TKTL2) of Bos taurus (Bovine).